We begin with the raw amino-acid sequence, 617 residues long: Elongation factor 4 (617 aa).

One can recognise a tr-type G domain in the interval 17-203 (ERIRNFCIIA…RVCELVPHPV (187 aa)). Residues 29–34 (DHGKST) and 150–153 (NKID) each bind GTP.

It belongs to the TRAFAC class translation factor GTPase superfamily. Classic translation factor GTPase family. LepA subfamily.

The protein resides in the cell membrane. It carries out the reaction GTP + H2O = GDP + phosphate + H(+). Its function is as follows. Required for accurate and efficient protein synthesis under certain stress conditions. May act as a fidelity factor of the translation reaction, by catalyzing a one-codon backward translocation of tRNAs on improperly translocated ribosomes. Back-translocation proceeds from a post-translocation (POST) complex to a pre-translocation (PRE) complex, thus giving elongation factor G a second chance to translocate the tRNAs correctly. Binds to ribosomes in a GTP-dependent manner. The polypeptide is Elongation factor 4 (Corynebacterium urealyticum (strain ATCC 43042 / DSM 7109)).